A 367-amino-acid polypeptide reads, in one-letter code: 3-dehydroquinate synthase (367 aa).

NAD(+)-binding positions include 69–74, 103–107, 127–128, Lys140, and Lys149; these read DGEAFK, GVIGD, and TT. Zn(2+) is bound by residues Glu182, His245, and His262.

It belongs to the sugar phosphate cyclases superfamily. Dehydroquinate synthase family. Co(2+) serves as cofactor. Zn(2+) is required as a cofactor. It depends on NAD(+) as a cofactor.

Its subcellular location is the cytoplasm. It carries out the reaction 7-phospho-2-dehydro-3-deoxy-D-arabino-heptonate = 3-dehydroquinate + phosphate. It functions in the pathway metabolic intermediate biosynthesis; chorismate biosynthesis; chorismate from D-erythrose 4-phosphate and phosphoenolpyruvate: step 2/7. In terms of biological role, catalyzes the conversion of 3-deoxy-D-arabino-heptulosonate 7-phosphate (DAHP) to dehydroquinate (DHQ). This is 3-dehydroquinate synthase from Pseudomonas savastanoi pv. phaseolicola (strain 1448A / Race 6) (Pseudomonas syringae pv. phaseolicola (strain 1448A / Race 6)).